The chain runs to 103 residues: MIVPLSHVLAVAALLFAVGGVMAAARRSILLILIGVEFMLAAAGLAFAGAGLAWNNLDGQAAVIIIMGLASAEAGLGLALLVHGRRGGGTDRADSYDRLGEES.

3 consecutive transmembrane segments (helical) span residues 1 to 21 (MIVP…VGGV), 29 to 49 (ILLI…AFAG), and 62 to 82 (AVII…ALLV). The interval 84 to 103 (GRRGGGTDRADSYDRLGEES) is disordered. Residues 88-103 (GGTDRADSYDRLGEES) show a composition bias toward basic and acidic residues.

It belongs to the complex I subunit 4L family. As to quaternary structure, NDH-1 is composed of 14 different subunits. Subunits NuoA, H, J, K, L, M, N constitute the membrane sector of the complex.

It localises to the cell inner membrane. It carries out the reaction a quinone + NADH + 5 H(+)(in) = a quinol + NAD(+) + 4 H(+)(out). Functionally, NDH-1 shuttles electrons from NADH, via FMN and iron-sulfur (Fe-S) centers, to quinones in the respiratory chain. The immediate electron acceptor for the enzyme in this species is believed to be ubiquinone. Couples the redox reaction to proton translocation (for every two electrons transferred, four hydrogen ions are translocated across the cytoplasmic membrane), and thus conserves the redox energy in a proton gradient. The polypeptide is NADH-quinone oxidoreductase subunit K (Solidesulfovibrio magneticus (strain ATCC 700980 / DSM 13731 / RS-1) (Desulfovibrio magneticus)).